The primary structure comprises 422 residues: Elongation factor 1-alpha (422 aa).

The 217-residue stretch at 5–221 folds into the tr-type G domain; it reads KPHMNLAVIG…DELKEPEKPS (217 aa). The tract at residues 14 to 21 is G1; that stretch reads GHIDHGKS. A GTP-binding site is contributed by 14-21; it reads GHIDHGKS. Position 21 (Ser21) interacts with Mg(2+). Residues 70 to 74 form a G2 region; sequence GITID. Residues 91–94 are G3; it reads DCPG. GTP is bound by residues 91–95 and 146–149; these read DCPGH and NKMD. The interval 146 to 149 is G4; it reads NKMD. The G5 stretch occupies residues 185 to 187; the sequence is SAF.

It belongs to the TRAFAC class translation factor GTPase superfamily. Classic translation factor GTPase family. EF-Tu/EF-1A subfamily.

Its subcellular location is the cytoplasm. It catalyses the reaction GTP + H2O = GDP + phosphate + H(+). Functionally, GTP hydrolase that promotes the GTP-dependent binding of aminoacyl-tRNA to the A-site of ribosomes during protein biosynthesis. This Methanosarcina acetivorans (strain ATCC 35395 / DSM 2834 / JCM 12185 / C2A) protein is Elongation factor 1-alpha.